A 266-amino-acid polypeptide reads, in one-letter code: GTP-binding protein Rhes (266 aa).

Residue 26–33 (GASRVGKS) participates in GTP binding. The short motif at 48–56 (YTPTIEDFH) is the Effector region element. Residues 73 to 77 (DTSGN) and 140 to 143 (NKND) contribute to the GTP site. The segment at 189–235 (MAKLPHEMSPALHHKISVQYGDAFHPRPFCMRRTKVAGAYGMVSPFA) is interaction with GNB1, GNB2 and GNB3. Cys263 bears the Cysteine methyl ester mark. Cys263 carries the S-farnesyl cysteine lipid modification. The propeptide at 264 to 266 (SIQ) is removed in mature form.

The protein belongs to the small GTPase superfamily. RasD family. Monomer (Potential). Interacts with PIK3CA and UBE2I. Interacts with GNB1, GNB2 and GNB3. Post-translationally, farnesylated. Farnesylation is required for membrane targeting. As to expression, highly expressed in brain; prominently in the striatum and weakly in kidney, thyroid, lung, heart and testis. Not expressed in liver. Expressed in pancreatic cell lines and in a embryonic stem cell line.

Its subcellular location is the cell membrane. In terms of biological role, GTPase signaling protein that binds to and hydrolyzes GTP. Regulates signaling pathways involving G-proteins-coupled receptor and heterotrimeric proteins such as GNB1, GNB2 and GNB3. May be involved in selected striatal competencies, mainly locomotor activity and motor coordination. This Mus musculus (Mouse) protein is GTP-binding protein Rhes (Rasd2).